The primary structure comprises 469 residues: Transcription factor phomD (469 aa).

A DNA-binding region (zn(2)-C6 fungal-type) is located at residues 14–41; that stretch reads CNACNESKVRCSQRKPTCARCERNGVEC. The disordered stretch occupies residues 49 to 118; sequence THKDAPPISM…QQKEEAAAAA (70 aa). Over residues 82–93 the composition is skewed to polar residues; that stretch reads KANSNSSSNWHM. A compositionally biased stretch (low complexity) spans 104-118; it reads QQQQQQQKEEAAAAA.

The protein resides in the nucleus. Transcription factor; part of the gene cluster that mediates the biosynthesis of the phomopsins, a group of hexapeptide mycotoxins which infects lupins and causes lupinosis disease in livestock. May play a role in the regulation of the production of phomopsins. The sequence is that of Transcription factor phomD from Diaporthe leptostromiformis (Lupinosis disease fungus).